The sequence spans 325 residues: 33 kDa chaperonin (325 aa).

Intrachain disulfides connect Cys260-Cys262 and Cys293-Cys296.

The protein belongs to the HSP33 family. In terms of processing, under oxidizing conditions two disulfide bonds are formed involving the reactive cysteines. Under reducing conditions zinc is bound to the reactive cysteines and the protein is inactive.

It is found in the cytoplasm. Redox regulated molecular chaperone. Protects both thermally unfolding and oxidatively damaged proteins from irreversible aggregation. Plays an important role in the bacterial defense system toward oxidative stress. The sequence is that of 33 kDa chaperonin from Aquifex aeolicus (strain VF5).